The sequence spans 254 residues: Leucyl/phenylalanyl-tRNA--protein transferase (254 aa).

Belongs to the L/F-transferase family.

Its subcellular location is the cytoplasm. It catalyses the reaction N-terminal L-lysyl-[protein] + L-leucyl-tRNA(Leu) = N-terminal L-leucyl-L-lysyl-[protein] + tRNA(Leu) + H(+). The catalysed reaction is N-terminal L-arginyl-[protein] + L-leucyl-tRNA(Leu) = N-terminal L-leucyl-L-arginyl-[protein] + tRNA(Leu) + H(+). The enzyme catalyses L-phenylalanyl-tRNA(Phe) + an N-terminal L-alpha-aminoacyl-[protein] = an N-terminal L-phenylalanyl-L-alpha-aminoacyl-[protein] + tRNA(Phe). Its function is as follows. Functions in the N-end rule pathway of protein degradation where it conjugates Leu, Phe and, less efficiently, Met from aminoacyl-tRNAs to the N-termini of proteins containing an N-terminal arginine or lysine. This chain is Leucyl/phenylalanyl-tRNA--protein transferase, found in Burkholderia multivorans (strain ATCC 17616 / 249).